The chain runs to 109 residues: Thioredoxin (109 aa).

Residues 2–107 (SISQVIDTSF…LLNTLQKHLK (106 aa)) form the Thioredoxin domain. Residues Cys31 and Cys34 each act as nucleophile in the active site. The cysteines at positions 31 and 34 are disulfide-linked.

This sequence belongs to the thioredoxin family.

It localises to the plastid. It is found in the chloroplast. Functionally, participates in various redox reactions through the reversible oxidation of its active center dithiol to a disulfide and catalyzes dithiol-disulfide exchange reactions. This is Thioredoxin (trxA) from Griffithsia pacifica (Red alga).